A 302-amino-acid chain; its full sequence is Protein NEOXANTHIN-DEFICIENT 1 (302 aa).

Required for neoxanthin biosynthesis. Probably not involved directly in the enzymatic conversion of violaxanthin to neoxanthin. Is necessary but not sufficient for neoxanthin synthesis. The polypeptide is Protein NEOXANTHIN-DEFICIENT 1 (Oryza sativa subsp. japonica (Rice)).